The sequence spans 239 residues: Seed lectin beta chain (239 aa).

Residues Asp-88 and Gly-106 each coordinate D-glucose. Positions 126 and 128 each coordinate Mn(2+). Residues Asp-128, Asn-132, and Asp-137 each contribute to the Ca(2+) site. Positions 137 and 142 each coordinate Mn(2+). The D-glucose site is built by Gly-217 and Ala-218.

Belongs to the leguminous lectin family. In terms of assembly, tetramer consisting of heterodimers of alpha and beta chains.

Functionally, galactose-binding lectin. Agglutinates human erythrocytes, and requires Ca(2+) and Mn(2+) ions for full agglutinating activity. Has antifungal activity against Fusarium sp., A.niger and A.flavus. In Spatholobus parviflorus (Butea parviflora), this protein is Seed lectin beta chain.